The chain runs to 88 residues: Small ribosomal subunit protein bS16 (88 aa).

The protein belongs to the bacterial ribosomal protein bS16 family.

The sequence is that of Small ribosomal subunit protein bS16 from Geobacter sp. (strain M21).